Reading from the N-terminus, the 3333-residue chain is Laminin subunit alpha-3 (3333 aa).

A signal peptide spans 1-35; sequence MAAAARPRGRALGPVLPPTPLLLLVLRVLPACGAT. A Laminin N-terminal domain is found at 43–298; the sequence is AGLSLHPTYF…SIKDISIGGQ (256 aa). Residues N142 and N242 are each glycosylated (N-linked (GlcNAc...) asparagine). The domain V stretch occupies residues 298 to 728; it reads QCVCNGHAEV…NNYYFPDLHH (431 aa). Cystine bridges form between C299–C308, C301–C319, C321–C330, C333–C353, C356–C365, C358–C390, C393–C402, C405–C423, C426–C436, C428–C443, C445–C454, C457–C467, C491–C503, C493–C509, C511–C520, C523–C533, C536–C548, C538–C555, C557–C566, C569–C586, C601–C610, C613–C628, C631–C645, C633–C652, C654–C663, C666–C681, C684–C696, C686–C703, and C705–C714. Laminin EGF-like domains follow at residues 299–355, 356–425, 426–469, 491–535, 536–588, 590–630, 631–683, and 684–728; these read CVCN…ECEA, CNCH…GCIP, CSCD…FCLR, CDCN…ICQA, CWCS…ACDP, GTIN…GCSE, CKCH…GCQG, and CQCD…DLHH. The interval 796 to 1265 is domain IV 1 (domain IV B); sequence TEAVSGHITI…VAFYHKGALP (470 aa). 16 disulfide bridges follow: C1266/C1278, C1268/C1285, C1287/C1296, C1299/C1309, C1312/C1319, C1314/C1326, C1328/C1337, C1340/C1353, C1356/C1371, C1358/C1378, C1380/C1389, C1392/C1402, C1405/C1417, C1407/C1424, C1426/C1435, and C1438/C1453. Laminin EGF-like domains are found at residues 1266–1311, 1312–1355, 1356–1404, and 1405–1455; these read CECH…RCKP, CSCG…GCEG, CNCS…ECVP, and CNCN…GCTS. Residues 1266–1465 form a domain III B region; that stretch reads CECHPTGATG…CFCFGVNNQC (200 aa). Residues 1476-1653 form the Laminin IV type A domain; it reads VDMLGWHLET…SGRIALAVEI (178 aa). Positions 1654–1821 are domain III A; the sequence is CACPPAYAGD…DSSPAEECDD (168 aa). Cystine bridges form between C1687-C1696, C1689-C1703, C1706-C1715, C1718-C1731, C1734-C1746, C1736-C1755, C1757-C1766, and C1769-C1784. 2 consecutive Laminin EGF-like domains span residues 1687-1733 and 1734-1786; these read CNCN…SCRA and CPCP…SCQP. The 35-residue stretch at 1787–1821 folds into the Laminin EGF-like 15; truncated domain; that stretch reads CSCNSNGQLGSCHPLTGDCINQEPKDSSPAEECDD. Residues 1822–2389 form a domain II and I region; it reads CDSCVMTLLN…ARDAASKVAV (568 aa). Coiled-coil stretches lie at residues 1852 to 1941 and 1987 to 2169; these read ASAG…KNVI and KHLR…DELV. The short motif at 2278–2280 is the Cell attachment site element; that stretch reads RGD. Positions 2322-2388 form a coiled coil; the sequence is RTQNEDFKKA…QARDAASKVA (67 aa). Residues N2365, N2502, and N2584 are each glycosylated (N-linked (GlcNAc...) asparagine). Laminin G-like domains are found at residues 2390-2591, 2598-2760, 2767-2927, 2986-3150, and 3157-3330; these read PMRF…VEPC, SDKN…TKKC, VRSA…LGGC, ALQF…VSSC, and KGIY…LNGC. Disulfide bonds link C2561–C2591, C2737–C2760, C2895–C2927, C3127–C3150, and C3302–C3330.

As to quaternary structure, laminin is a complex glycoprotein, consisting of three different polypeptide chains (alpha, beta, gamma), which are bound to each other by disulfide bonds into a cross-shaped molecule comprising one long and three short arms with globules at each end. Alpha-3 is a subunit of laminin-5 (laminin-332 or epiligrin/kalinin/nicein), laminin-6 (laminin-311 or K-laminin) and laminin-7 (laminin-321 or KS-laminin). Skin; respiratory, urinary, and digestive epithelia and in other specialized tissues with prominent secretory or protective functions. Epithelial basement membrane, and epithelial cell tongue that migrates into a wound bed. A differential and focal expression of the subunit alpha-3 is observed in the CNS.

Its subcellular location is the secreted. It localises to the extracellular space. The protein resides in the extracellular matrix. It is found in the basement membrane. Binding to cells via a high affinity receptor, laminin is thought to mediate the attachment, migration and organization of cells into tissues during embryonic development by interacting with other extracellular matrix components. Functionally, laminin-5 is thought to be involved in (1) cell adhesion via integrin alpha-3/beta-1 in focal adhesion and integrin alpha-6/beta-4 in hemidesmosomes, (2) signal transduction via tyrosine phosphorylation of pp125-FAK and p80, (3) differentiation of keratinocytes. In Homo sapiens (Human), this protein is Laminin subunit alpha-3 (LAMA3).